Reading from the N-terminus, the 372-residue chain is Neuropeptide S receptor (372 aa).

The Extracellular portion of the chain corresponds to 1 to 52 (MPANLTEGSFHANQTVPMLDSSPVACTEIVTFTEALEAEEWGSFYSSFKTEQ). Residues N4 and N13 are each glycosylated (N-linked (GlcNAc...) asparagine). A helical membrane pass occupies residues 53-73 (LITLWVLFVFTIVGNSVVLFS). The Cytoplasmic portion of the chain corresponds to 74-82 (TWRRKRKSR). A helical transmembrane segment spans residues 83 to 103 (MTFFVTQLAITDSFTGLINIL). The Extracellular segment spans residues 104–122 (TDIIWRFTGDFMAPDLVCR). C121 and C198 are joined by a disulfide. The chain crosses the membrane as a helical span at residues 123–143 (IVRYLQVVLLYASTYVLVSLS). At 144–165 (IDRYHAIVYPMKFLQGAEKQAK) the chain is on the cytoplasmic side. The chain crosses the membrane as a helical span at residues 166-186 (VLIGIAWSLSFLFSIPTLIIF). Residues 187–213 (GKRTLSNGEVQCWALWPDDSYWTPYMT) lie on the Extracellular side of the membrane. A helical membrane pass occupies residues 214 to 234 (IVAFLVYFIPLTIISVIYGLV). The Cytoplasmic segment spans residues 235–276 (IRTIWIKSKAHETVISNCSDGELCCSYNRGLISKAKIKAIKY). Residues 277–297 (SIVIILAFICCWSPYFLFDML) form a helical membrane-spanning segment. Residues 298-313 (DNFNLLPDTKERFYAS) lie on the Extracellular side of the membrane. The helical transmembrane segment at 314–334 (VIIQNLPALNSAINPLIYCIF) threads the bilayer. Over 335 to 372 (SGSLCSPCKVQRSQDSRMTYRERSERHEMQILSKPEFI) the chain is Cytoplasmic.

This sequence belongs to the G-protein coupled receptor 1 family. Vasopressin/oxytocin receptor subfamily.

It localises to the cell membrane. Functionally, G-protein coupled receptor for neuropeptide S (NPS). Promotes mobilization of intracellular Ca(2+) stores. Inhibits cell growth in response to NPS binding. Involved in pathogenesis of asthma and other IgE-mediated diseases. The polypeptide is Neuropeptide S receptor (Npsr1) (Rattus norvegicus (Rat)).